Here is a 274-residue protein sequence, read N- to C-terminus: Large ribosomal subunit protein uL2 (274 aa).

A disordered region spans residues 223 to 274 (VAMNPVDHPHGGGEGRTSGGRHPVTPWGVPTKGYKTRSNKRTDKYIVRRRNK).

The protein belongs to the universal ribosomal protein uL2 family. Part of the 50S ribosomal subunit. Forms a bridge to the 30S subunit in the 70S ribosome.

Functionally, one of the primary rRNA binding proteins. Required for association of the 30S and 50S subunits to form the 70S ribosome, for tRNA binding and peptide bond formation. It has been suggested to have peptidyltransferase activity; this is somewhat controversial. Makes several contacts with the 16S rRNA in the 70S ribosome. The chain is Large ribosomal subunit protein uL2 from Shewanella sp. (strain ANA-3).